The primary structure comprises 236 residues: Alanyl-tRNA editing protein AlaX-M (236 aa).

The Zn(2+) site is built by His-101, His-105, and His-205.

The protein belongs to the class-II aminoacyl-tRNA synthetase family. Editing domain AlaX-M subfamily. The cofactor is Zn(2+).

It is found in the cytoplasm. In terms of biological role, functions in trans to edit the amino acid moiety from incorrectly charged Ser-tRNA(Ala). The polypeptide is Alanyl-tRNA editing protein AlaX-M (alaXM) (Saccharolobus solfataricus (strain ATCC 35092 / DSM 1617 / JCM 11322 / P2) (Sulfolobus solfataricus)).